The chain runs to 325 residues: Peroxidase 47 (325 aa).

The first 36 residues, 1–36, serve as a signal peptide directing secretion; that stretch reads MLTRFKKQNNKMVRANIVSMVLLMHAIVGFPFHARG. Intrachain disulfides connect cysteine 46–cysteine 125, cysteine 79–cysteine 84, cysteine 131–cysteine 321, and cysteine 209–cysteine 235. Histidine 77 acts as the Proton acceptor in catalysis. The Ca(2+) site is built by aspartate 78, glycine 83, aspartate 85, and serine 87. Proline 172 serves as a coordination point for substrate. An N-linked (GlcNAc...) asparagine glycan is attached at asparagine 177. Residue histidine 202 coordinates heme b. Ca(2+) is bound at residue threonine 203. Aspartate 246, threonine 248, and aspartate 253 together coordinate Ca(2+).

This sequence belongs to the peroxidase family. Classical plant (class III) peroxidase subfamily. Heme b serves as cofactor. Ca(2+) is required as a cofactor.

The protein resides in the secreted. The enzyme catalyses 2 a phenolic donor + H2O2 = 2 a phenolic radical donor + 2 H2O. Removal of H(2)O(2), oxidation of toxic reductants, biosynthesis and degradation of lignin, suberization, auxin catabolism, response to environmental stresses such as wounding, pathogen attack and oxidative stress. These functions might be dependent on each isozyme/isoform in each plant tissue. The protein is Peroxidase 47 (PER47) of Arabidopsis thaliana (Mouse-ear cress).